A 671-amino-acid polypeptide reads, in one-letter code: Probable potassium transport system protein Kup 2 (671 aa).

12 consecutive transmembrane segments (helical) span residues 18–38 (GFLI…LYAM), 60–80 (VSLV…LIAL), 103–123 (WLII…ALTP), 146–166 (AVMV…RFGA), 173–193 (FGPI…INSF), 218–238 (AGFF…ALYS), 252–272 (WPFV…WLLA), 292–312 (MVIY…QALI), 343–363 (LYIP…VLYF), 373–393 (YSLA…YFLI), 402–422 (IAII…ASLV), and 424–444 (FING…VMFI).

Belongs to the HAK/KUP transporter (TC 2.A.72) family.

It localises to the cell membrane. It carries out the reaction K(+)(in) + H(+)(in) = K(+)(out) + H(+)(out). In terms of biological role, transport of potassium into the cell. Likely operates as a K(+):H(+) symporter. This chain is Probable potassium transport system protein Kup 2, found in Lactococcus lactis subsp. lactis (strain IL1403) (Streptococcus lactis).